The primary structure comprises 203 residues: DNA-directed RNA polymerase subunit gamma (203 aa).

Positions 34, 36, 49, and 52 each coordinate Zn(2+).

This sequence belongs to the RNA polymerase beta' chain family. RpoC1 subfamily. In terms of assembly, in cyanobacteria the RNAP catalytic core is composed of 2 alpha, 1 beta, 1 beta', 1 gamma and 1 omega subunit. When a sigma factor is associated with the core the holoenzyme is formed, which can initiate transcription. Zn(2+) is required as a cofactor.

The catalysed reaction is RNA(n) + a ribonucleoside 5'-triphosphate = RNA(n+1) + diphosphate. DNA-dependent RNA polymerase catalyzes the transcription of DNA into RNA using the four ribonucleoside triphosphates as substrates. The polypeptide is DNA-directed RNA polymerase subunit gamma (rpoC1) (Prochlorothrix hollandica).